The sequence spans 415 residues: Peptide chain release factor subunit 1 (415 aa).

It belongs to the eukaryotic release factor 1 family. In terms of assembly, heterodimer of two subunits, one of which binds GTP.

The protein resides in the cytoplasm. Its function is as follows. Directs the termination of nascent peptide synthesis (translation) in response to the termination codons UAA, UAG and UGA. The polypeptide is Peptide chain release factor subunit 1 (Thermococcus kodakarensis (strain ATCC BAA-918 / JCM 12380 / KOD1) (Pyrococcus kodakaraensis (strain KOD1))).